Here is a 324-residue protein sequence, read N- to C-terminus: UDP-N-acetylenolpyruvoylglucosamine reductase (324 aa).

Residues 36 to 211 enclose the FAD-binding PCMH-type domain; it reads FRAGGLAELM…AEDKAKIRND (176 aa). R183 is an active-site residue. S232 functions as the Proton donor in the catalytic mechanism. Residue E302 is part of the active site.

Belongs to the MurB family. FAD is required as a cofactor.

Its subcellular location is the cytoplasm. The catalysed reaction is UDP-N-acetyl-alpha-D-muramate + NADP(+) = UDP-N-acetyl-3-O-(1-carboxyvinyl)-alpha-D-glucosamine + NADPH + H(+). The protein operates within cell wall biogenesis; peptidoglycan biosynthesis. Cell wall formation. The protein is UDP-N-acetylenolpyruvoylglucosamine reductase of Sinorhizobium medicae (strain WSM419) (Ensifer medicae).